Reading from the N-terminus, the 230-residue chain is 7-cyano-7-deazaguanine synthase (230 aa).

9–19 (YSGGLDSTTCL) provides a ligand contact to ATP. Zn(2+) is bound by residues C190, C200, C203, and C206.

It belongs to the QueC family. It depends on Zn(2+) as a cofactor.

The enzyme catalyses 7-carboxy-7-deazaguanine + NH4(+) + ATP = 7-cyano-7-deazaguanine + ADP + phosphate + H2O + H(+). The protein operates within purine metabolism; 7-cyano-7-deazaguanine biosynthesis. Catalyzes the ATP-dependent conversion of 7-carboxy-7-deazaguanine (CDG) to 7-cyano-7-deazaguanine (preQ(0)). This Syntrophotalea carbinolica (strain DSM 2380 / NBRC 103641 / GraBd1) (Pelobacter carbinolicus) protein is 7-cyano-7-deazaguanine synthase.